Here is a 118-residue protein sequence, read N- to C-terminus: Small ribosomal subunit protein uS13 (118 aa).

Residues 91–118 are disordered; that stretch reads HRRSLPVRGQRTKTNARTRKGPRKPIKA.

Belongs to the universal ribosomal protein uS13 family. As to quaternary structure, part of the 30S ribosomal subunit. Forms a loose heterodimer with protein S19. Forms two bridges to the 50S subunit in the 70S ribosome.

Its function is as follows. Located at the top of the head of the 30S subunit, it contacts several helices of the 16S rRNA. In the 70S ribosome it contacts the 23S rRNA (bridge B1a) and protein L5 of the 50S subunit (bridge B1b), connecting the 2 subunits; these bridges are implicated in subunit movement. Contacts the tRNAs in the A and P-sites. In Francisella tularensis subsp. tularensis (strain FSC 198), this protein is Small ribosomal subunit protein uS13.